We begin with the raw amino-acid sequence, 160 residues long: Biogenesis of lysosome-related organelles complex 1 subunit 5 (160 aa).

This sequence belongs to the BLOC1S5 family. Component of the biogenesis of lysosome-related organelles complex-1 (BLOC-1) composed of Blos1, Blos2, Blos3, Blos4, Dysb, Muted, Pldn and Snapin.

In terms of biological role, component of the biogenesis of lysosome-related organelles complex-1 (BLOC-1) involved in pigment granule biogenesis. In Drosophila melanogaster (Fruit fly), this protein is Biogenesis of lysosome-related organelles complex 1 subunit 5.